The chain runs to 131 residues: ER membrane protein complex subunit 5 (131 aa).

At 1 to 3 the chain is on the cytoplasmic side; the sequence is MAP. Residues 4-22 traverse the membrane as a helical segment; that stretch reads SLWKGLVGIGLFALAHAAF. The Lumenal portion of the chain corresponds to 23–43; that stretch reads SAAQHRSYMRLTEKEDESLPI. A helical membrane pass occupies residues 44 to 63; that stretch reads DIVLQTLLAFAVTCYGIVHI. Residues 64–131 lie on the Cytoplasmic side of the membrane; that stretch reads AGEFKDMDAT…KLRKLESLRR (68 aa). Serine 120 is subject to Phosphoserine.

Belongs to the membrane magnesium transporter (TC 1.A.67) family. In terms of assembly, component of the ER membrane protein complex (EMC).

The protein localises to the endoplasmic reticulum membrane. It is found in the golgi apparatus membrane. It localises to the early endosome membrane. Its function is as follows. Part of the endoplasmic reticulum membrane protein complex (EMC) that enables the energy-independent insertion into endoplasmic reticulum membranes of newly synthesized membrane proteins. Preferentially accommodates proteins with transmembrane domains that are weakly hydrophobic or contain destabilizing features such as charged and aromatic residues. Involved in the cotranslational insertion of multi-pass membrane proteins in which stop-transfer membrane-anchor sequences become ER membrane spanning helices. It is also required for the post-translational insertion of tail-anchored/TA proteins in endoplasmic reticulum membranes. By mediating the proper cotranslational insertion of N-terminal transmembrane domains in an N-exo topology, with translocated N-terminus in the lumen of the ER, controls the topology of multi-pass membrane proteins like the G protein-coupled receptors. By regulating the insertion of various proteins in membranes, it is indirectly involved in many cellular processes. May be involved in Mg(2+) transport. In Homo sapiens (Human), this protein is ER membrane protein complex subunit 5.